The primary structure comprises 349 residues: Green-sensitive opsin-2 (349 aa).

Over 1 to 36 the chain is Extracellular; that stretch reads MNGTEGNNFYIPMSNRTGLVRSPYEYTQYYLADPWQ. N-linked (GlcNAc...) asparagine glycosylation is found at Asn-2 and Asn-15. Residues 37 to 61 form a helical membrane-spanning segment; sequence FKALAFYMFFLICFGLPINVLTLLV. The Cytoplasmic portion of the chain corresponds to 62 to 73; the sequence is TAQHKKLRQPLN. The chain crosses the membrane as a helical span at residues 74–99; that stretch reads YILVNLAFAGTIMAFFGFTVTFYCSI. The Extracellular portion of the chain corresponds to 100–113; it reads NGYMALGPTGCAIE. Cys-110 and Cys-187 are joined by a disulfide. The helical transmembrane segment at 114 to 133 threads the bilayer; it reads GFFATLGGQVALWSLVVLAI. Over 134 to 152 the chain is Cytoplasmic; that stretch reads ERYIVVCKPMGSFKFSSNH. Residues 153–176 form a helical membrane-spanning segment; that stretch reads AMAGIAFTWVMASSCAVPPLFGWS. Residues 177 to 202 are Extracellular-facing; that stretch reads RYIPEGMQTSCGPDYYTLNPEFNNES. N-linked (GlcNAc...) asparagine glycosylation occurs at Asn-200. A helical transmembrane segment spans residues 203 to 230; that stretch reads YVLYMFSCHFCVPVTTIFFTYGSLVCTV. At 231–252 the chain is on the cytoplasmic side; the sequence is KAAAAQQQESESTQKAEREVTR. A helical membrane pass occupies residues 253 to 276; sequence MVILMVLGFLVAWVPYASFAAWIF. Topologically, residues 277-284 are extracellular; it reads FNRGAAFS. The chain crosses the membrane as a helical span at residues 285–309; that stretch reads AQAMAIPAFFSKASALFNPIIYVLL. Lys-296 carries the post-translational modification N6-(retinylidene)lysine. The Cytoplasmic portion of the chain corresponds to 310–349; sequence NKQFRSCMLNTLFCGKSPLGDDESSSVSTSKTEVSSVSPA. Residues 328–349 form a disordered region; it reads LGDDESSSVSTSKTEVSSVSPA. Residues 334–349 show a composition bias toward low complexity; that stretch reads SSVSTSKTEVSSVSPA.

The protein belongs to the G-protein coupled receptor 1 family. Opsin subfamily. In terms of processing, phosphorylated on some or all of the serine and threonine residues present in the C-terminal region.

It is found in the membrane. Functionally, visual pigments are the light-absorbing molecules that mediate vision. They consist of an apoprotein, opsin, covalently linked to cis-retinal. The sequence is that of Green-sensitive opsin-2 (opn1mw2) from Danio rerio (Zebrafish).